The sequence spans 182 residues: Ribosome-recycling factor (182 aa).

This sequence belongs to the RRF family.

It localises to the cytoplasm. Its function is as follows. Responsible for the release of ribosomes from messenger RNA at the termination of protein biosynthesis. May increase the efficiency of translation by recycling ribosomes from one round of translation to another. The sequence is that of Ribosome-recycling factor from Mycoplasma capricolum subsp. capricolum (strain California kid / ATCC 27343 / NCTC 10154).